Reading from the N-terminus, the 362-residue chain is Histidinol-phosphate aminotransferase (362 aa).

At Lys218 the chain carries N6-(pyridoxal phosphate)lysine.

The protein belongs to the class-II pyridoxal-phosphate-dependent aminotransferase family. Histidinol-phosphate aminotransferase subfamily. Homodimer. The cofactor is pyridoxal 5'-phosphate.

It catalyses the reaction L-histidinol phosphate + 2-oxoglutarate = 3-(imidazol-4-yl)-2-oxopropyl phosphate + L-glutamate. Its pathway is amino-acid biosynthesis; L-histidine biosynthesis; L-histidine from 5-phospho-alpha-D-ribose 1-diphosphate: step 7/9. The sequence is that of Histidinol-phosphate aminotransferase from Xanthomonas campestris pv. campestris (strain 8004).